We begin with the raw amino-acid sequence, 333 residues long: Beta-ketoacyl-[acyl-carrier-protein] synthase III (333 aa).

Active-site residues include C114 and H255. The tract at residues 256 to 260 (QANYR) is ACP-binding. Residue N285 is part of the active site.

The protein belongs to the thiolase-like superfamily. FabH family. As to quaternary structure, homodimer.

Its subcellular location is the cytoplasm. The catalysed reaction is malonyl-[ACP] + acetyl-CoA + H(+) = 3-oxobutanoyl-[ACP] + CO2 + CoA. The protein operates within lipid metabolism; fatty acid biosynthesis. Catalyzes the condensation reaction of fatty acid synthesis by the addition to an acyl acceptor of two carbons from malonyl-ACP. Catalyzes the first condensation reaction which initiates fatty acid synthesis and may therefore play a role in governing the total rate of fatty acid production. Possesses both acetoacetyl-ACP synthase and acetyl transacylase activities. Its substrate specificity determines the biosynthesis of branched-chain and/or straight-chain of fatty acids. This is Beta-ketoacyl-[acyl-carrier-protein] synthase III from Aliarcobacter butzleri (strain RM4018) (Arcobacter butzleri).